Here is a 187-residue protein sequence, read N- to C-terminus: Dirigent protein 6 (187 aa).

Positions 1 to 29 (MAFLVEKQLFKALFSFFLLVLLFSDTVLS) are cleaved as a signal peptide. Cys-40 and Cys-186 are oxidised to a cystine. N-linked (GlcNAc...) asparagine glycosylation is found at Asn-59 and Asn-123.

It belongs to the plant dirigent protein family. Homodimer. As to expression, expressed in roots, cotyledon veins, leaf trichomes, flowers, siliques, and meristems. Present in interfascicular/vascular cambia and developing xylem.

It is found in the secreted. The protein resides in the extracellular space. Its subcellular location is the apoplast. Its function is as follows. Dirigent proteins impart stereoselectivity on the phenoxy radical-coupling reaction, yielding optically active lignans from two molecules of coniferyl alcohol in the biosynthesis of lignans, flavonolignans, and alkaloids and thus plays a central role in plant secondary metabolism. Enantiocomplementary dirigent protein that mediates the laccase-catalyzed enantioselective oxidative phenol coupling of (E)-coniferyl alcohol to (-)-pinoresinol. The sequence is that of Dirigent protein 6 (DIR6) from Arabidopsis thaliana (Mouse-ear cress).